Consider the following 275-residue polypeptide: NH(3)-dependent NAD(+) synthetase (275 aa).

50-57 lines the ATP pocket; the sequence is GISGGVDS. D56 provides a ligand contact to Mg(2+). Position 147 (R147) interacts with deamido-NAD(+). T167 is an ATP binding site. E172 contributes to the Mg(2+) binding site. Deamido-NAD(+) contacts are provided by K180 and D187. Residues K196 and T218 each contribute to the ATP site. 267 to 268 contributes to the deamido-NAD(+) binding site; the sequence is HK.

This sequence belongs to the NAD synthetase family. As to quaternary structure, homodimer.

It catalyses the reaction deamido-NAD(+) + NH4(+) + ATP = AMP + diphosphate + NAD(+) + H(+). Its pathway is cofactor biosynthesis; NAD(+) biosynthesis; NAD(+) from deamido-NAD(+) (ammonia route): step 1/1. Catalyzes the ATP-dependent amidation of deamido-NAD to form NAD. Uses ammonia as a nitrogen source. This chain is NH(3)-dependent NAD(+) synthetase, found in Pseudomonas putida (strain GB-1).